The chain runs to 519 residues: Xylose import ATP-binding protein XylG (519 aa).

ABC transporter domains follow at residues 6–245 (LTMR…VGRE) and 262–507 (LEAR…LTPA). ATP is bound at residue 38–45 (GENGAGKS).

Belongs to the ABC transporter superfamily. Xylose importer (TC 3.A.1.2.4) family. The complex is composed of two ATP-binding proteins (XylG), two transmembrane proteins (XylH) and a solute-binding protein (XylF).

It is found in the cell inner membrane. It carries out the reaction D-xylose(out) + ATP + H2O = D-xylose(in) + ADP + phosphate + H(+). Its function is as follows. Part of the ABC transporter complex XylFGH involved in xylose import. Responsible for energy coupling to the transport system. This chain is Xylose import ATP-binding protein XylG, found in Burkholderia ambifaria (strain ATCC BAA-244 / DSM 16087 / CCUG 44356 / LMG 19182 / AMMD) (Burkholderia cepacia (strain AMMD)).